A 180-amino-acid polypeptide reads, in one-letter code: Large ribosomal subunit protein uL5 (180 aa).

It belongs to the universal ribosomal protein uL5 family. As to quaternary structure, part of the 50S ribosomal subunit; part of the 5S rRNA/L5/L18/L25 subcomplex. Contacts the 5S rRNA and the P site tRNA. Forms a bridge to the 30S subunit in the 70S ribosome.

Its function is as follows. This is one of the proteins that bind and probably mediate the attachment of the 5S RNA into the large ribosomal subunit, where it forms part of the central protuberance. In the 70S ribosome it contacts protein S13 of the 30S subunit (bridge B1b), connecting the 2 subunits; this bridge is implicated in subunit movement. Contacts the P site tRNA; the 5S rRNA and some of its associated proteins might help stabilize positioning of ribosome-bound tRNAs. The sequence is that of Large ribosomal subunit protein uL5 from Lactobacillus johnsonii (strain CNCM I-12250 / La1 / NCC 533).